The chain runs to 150 residues: uncharacterized protein (150 aa).

A signal peptide spans methionine 1 to glycine 21.

This is an uncharacterized protein from Mycobacterium tuberculosis (strain CDC 1551 / Oshkosh).